The sequence spans 1080 residues: Carbamoyl phosphate synthase large chain (1080 aa).

The carboxyphosphate synthetic domain stretch occupies residues 1–403 (MPKRTDLRTI…SLQKAVRGLE (403 aa)). The ATP site is built by R129, R169, G175, G176, E208, V210, E215, G241, V242, H243, Q285, and E299. Residues 133–328 (RVAMQEIGLE…IAKIAAKLAV (196 aa)) enclose the ATP-grasp 1 domain. The Mg(2+) site is built by Q285, E299, and N301. Mn(2+)-binding residues include Q285, E299, and N301. An oligomerization domain region spans residues 404 to 554 (TGKVGLEPTG…YSTYEEECEA (151 aa)). The carbamoyl phosphate synthetic domain stretch occupies residues 555-942 (APSDRRKIMI…AFARAQEAGD (388 aa)). Residues 679–876 (QKLVQQLGLR…LAKIAARCMT (198 aa)) enclose the ATP-grasp 2 domain. 10 residues coordinate ATP: R715, R754, L756, E761, G787, V788, H789, S790, Q830, and E847. Q830, E847, and N849 together coordinate Mg(2+). Residues Q830, E847, and N849 each contribute to the Mn(2+) site. Positions 943-1080 (IRAPQPGRAF…LQELHKELQV (138 aa)) constitute an MGS-like domain. An allosteric domain region spans residues 943–1080 (IRAPQPGRAF…LQELHKELQV (138 aa)).

It belongs to the CarB family. As to quaternary structure, composed of two chains; the small (or glutamine) chain promotes the hydrolysis of glutamine to ammonia, which is used by the large (or ammonia) chain to synthesize carbamoyl phosphate. Tetramer of heterodimers (alpha,beta)4. The cofactor is Mg(2+). Mn(2+) is required as a cofactor.

The catalysed reaction is hydrogencarbonate + L-glutamine + 2 ATP + H2O = carbamoyl phosphate + L-glutamate + 2 ADP + phosphate + 2 H(+). It catalyses the reaction hydrogencarbonate + NH4(+) + 2 ATP = carbamoyl phosphate + 2 ADP + phosphate + 2 H(+). It participates in amino-acid biosynthesis; L-arginine biosynthesis; carbamoyl phosphate from bicarbonate: step 1/1. Its pathway is pyrimidine metabolism; UMP biosynthesis via de novo pathway; (S)-dihydroorotate from bicarbonate: step 1/3. Its function is as follows. Large subunit of the glutamine-dependent carbamoyl phosphate synthetase (CPSase). CPSase catalyzes the formation of carbamoyl phosphate from the ammonia moiety of glutamine, carbonate, and phosphate donated by ATP, constituting the first step of 2 biosynthetic pathways, one leading to arginine and/or urea and the other to pyrimidine nucleotides. The large subunit (synthetase) binds the substrates ammonia (free or transferred from glutamine from the small subunit), hydrogencarbonate and ATP and carries out an ATP-coupled ligase reaction, activating hydrogencarbonate by forming carboxy phosphate which reacts with ammonia to form carbamoyl phosphate. This chain is Carbamoyl phosphate synthase large chain, found in Xylella fastidiosa (strain 9a5c).